We begin with the raw amino-acid sequence, 45 residues long: Photosystem II reaction center protein K (45 aa).

The propeptide occupies 1–8 (MFSINFLG). A helical membrane pass occupies residues 17–37 (FDPIVDVLPIIPLLFLLLAFV).

The protein belongs to the PsbK family. In terms of assembly, PSII is composed of 1 copy each of membrane proteins PsbA, PsbB, PsbC, PsbD, PsbE, PsbF, PsbH, PsbI, PsbJ, PsbK, PsbL, PsbM, PsbT, PsbY, PsbZ, Psb30/Ycf12, at least 3 peripheral proteins of the oxygen-evolving complex and a large number of cofactors. It forms dimeric complexes.

The protein resides in the plastid. Its subcellular location is the chloroplast thylakoid membrane. In terms of biological role, one of the components of the core complex of photosystem II (PSII). PSII is a light-driven water:plastoquinone oxidoreductase that uses light energy to abstract electrons from H(2)O, generating O(2) and a proton gradient subsequently used for ATP formation. It consists of a core antenna complex that captures photons, and an electron transfer chain that converts photonic excitation into a charge separation. The polypeptide is Photosystem II reaction center protein K (Euglena viridis (Cercaria viridis)).